A 133-amino-acid polypeptide reads, in one-letter code: Protein PROTON GRADIENT REGULATION 5, chloroplastic (133 aa).

Residues 1–60 (MAAASISAIGCNQTLIGTSFYGGWGSSISGEDYQTMLSKTVAPPQQARVSRKAIRAVPMM) constitute a chloroplast transit peptide.

Belongs to the PGR5 family. In terms of assembly, interacts with PGRL1A and PGRL1B. In terms of processing, disulfide bonds; Cys-11 and Cys-105 are probably involved in the formation of disulfide bridges with 'Cys-300' and 'Cys-303' of PGRL1A. 'Cys-272' and 'Cys-275' of PGRL1A may also be used to form the disulfide bridges, but in this case the cyclic electron flow is lost.

Its subcellular location is the plastid. The protein resides in the chloroplast thylakoid membrane. Its function is as follows. Critical for growth under fluctuating-light conditions. Involved in the regulation of the cyclic electron flow (CEF) around Photosystem I. Essential for the reduction of PGRL1A by ferredoxin and for photoprotection. Contributes to maximize photosynthesis efficiency after a long dark adaptation via the regulation of non-photochemical quenching (NPQ); acts independently from DLDG1. Promotes the induction of steady-state proton motive force (pmf) and energy-dependent quenching (qE). In Arabidopsis thaliana (Mouse-ear cress), this protein is Protein PROTON GRADIENT REGULATION 5, chloroplastic.